The following is a 68-amino-acid chain: DNA-directed RNA polymerase subunit omega (68 aa).

This sequence belongs to the RNA polymerase subunit omega family. The RNAP catalytic core consists of 2 alpha, 1 beta, 1 beta' and 1 omega subunit. When a sigma factor is associated with the core the holoenzyme is formed, which can initiate transcription.

The enzyme catalyses RNA(n) + a ribonucleoside 5'-triphosphate = RNA(n+1) + diphosphate. In terms of biological role, promotes RNA polymerase assembly. Latches the N- and C-terminal regions of the beta' subunit thereby facilitating its interaction with the beta and alpha subunits. This chain is DNA-directed RNA polymerase subunit omega, found in Persephonella marina (strain DSM 14350 / EX-H1).